Consider the following 591-residue polypeptide: MSAYRSHTCGELTAAAAGSEIRLSGWVHRVRDHGGVLFIDLRDHYGITQVIADSDSLAFAALEKLRAETVIRIDGRVKLRDPSLVNPKLPTGEIEVYATAMEVLGAADDLPLPVFGDQDYPEETRLTYRFLDLRRESLHNNIMLRSRVVKWLRDAMWDQGFTEFQTPIITASSPEGARDFLVPSRLHPGKFYALPQAPQQFKQLIMVAGFDKYFQIAPCFRDEDPRADRSPTDFYQLDLEMSFVEQEDVFRAIQPVIQGLFEEFGGGRRVDTDWPRIPYAEAMLKYGSDKPDLRNPIEMQVVSDHFRGSGFAIFAKLLEQDGTEVRAIPAPGGGSRKFADRMNAFAQGQGLPGMGYIFWRKAEDGTTEAAGPIAKALGPEKTEAIRTQLGLGEGDAAFFLGGKPETFEAVAGRARNEIGRELGLIDENQFKFAWIVDFPMYEKGEDGRIDFSHNPFSMPQGGLDALEGDPLAVMGYQYDLACNGYELVSGAIRNHRPEIMFRAFELAGYGRDEVEKRFGGMVKAFRYGAPPHGGCAAGIDRIVMLLADEVNIREVIMFPMNQRAEDLMMGAPSEPTNEQLRELRLRVLPRE.

An L-aspartate-binding site is contributed by glutamate 175. The segment at 199–202 is aspartate; it reads QQFK. The L-aspartate site is built by arginine 221 and histidine 453. 221–223 contacts ATP; the sequence is RDE. Glutamate 486 is a binding site for ATP. Arginine 493 contacts L-aspartate. An ATP-binding site is contributed by 538-541; sequence GIDR.

The protein belongs to the class-II aminoacyl-tRNA synthetase family. Type 1 subfamily. Homodimer.

It localises to the cytoplasm. It catalyses the reaction tRNA(Asx) + L-aspartate + ATP = L-aspartyl-tRNA(Asx) + AMP + diphosphate. Its function is as follows. Aspartyl-tRNA synthetase with relaxed tRNA specificity since it is able to aspartylate not only its cognate tRNA(Asp) but also tRNA(Asn). Reaction proceeds in two steps: L-aspartate is first activated by ATP to form Asp-AMP and then transferred to the acceptor end of tRNA(Asp/Asn). The chain is Aspartate--tRNA(Asp/Asn) ligase from Paracoccus denitrificans (strain Pd 1222).